We begin with the raw amino-acid sequence, 80 residues long: UPF0248 protein YG5714_2801 (80 aa).

This sequence belongs to the UPF0248 family.

This Saccharolobus islandicus (strain Y.G.57.14 / Yellowstone #1) (Sulfolobus islandicus) protein is UPF0248 protein YG5714_2801.